The chain runs to 706 residues: mRNA (2'-O-methyladenosine-N(6)-)-methyltransferase (706 aa).

The tract at residues 1-34 is disordered; the sequence is MANENHGSPREGASLLSHSPGTSSQSQPCSPKPV. Over residues 16 to 29 the composition is skewed to polar residues; the sequence is LSHSPGTSSQSQPC. Ser30 carries the post-translational modification Phosphoserine. In terms of domain architecture, WW spans 43–77; the sequence is ELVHAGWEKCWSRRESRPYYFNRFTNQSLWEMPVL. Positions 88–148 are disordered; that stretch reads GLNATPLPQD…QSVPSSPSIP (61 aa). The Nuclear localization signal motif lies at 109–113; the sequence is KSRKR. Ser116 is modified (phosphoserine). Residues 132 to 147 are compositionally biased toward low complexity; that stretch reads IPVTPTSQSVPSSPSI. Thr152 bears the Phosphothreonine mark. 2 residues coordinate substrate: Arg234 and Arg264. Position 552–555 (552–555) interacts with S-adenosyl-L-methionine; that stretch reads NPPF. Substrate-binding positions include Glu557 and 587-591; that span reads WREPP. 613–615 lines the S-adenosyl-L-methionine pocket; it reads FEH. Positions 663-706 are disordered; sequence TAAYKQSGRSHGSSSSSSSSSSSSEAKDRDSGREQGPSREPHPT. Positions 668-686 match the Nuclear localization signal motif; sequence QSGRSHGSSSSSSSSSSSS. Residues 675–686 are compositionally biased toward low complexity; the sequence is SSSSSSSSSSSS. Over residues 687–706 the composition is skewed to basic and acidic residues; sequence EAKDRDSGREQGPSREPHPT.

It belongs to the CAPAM family. In terms of assembly, interacts with POLR2A; interacts with the phosphorylated C-terminal domain (CTD) of POLR2A.

The protein localises to the nucleus. It catalyses the reaction a 5'-end (N(7)-methyl 5'-triphosphoguanosine)-(2'-O-methyladenosine) in mRNA + S-adenosyl-L-methionine = a 5'-end (N(7)-methyl 5'-triphosphoguanosine)-(N(6),2'-O-dimethyladenosine) in mRNA + S-adenosyl-L-homocysteine + H(+). With respect to regulation, cap-specific adenosine methyltransferase activity is inhibited by zinc. Its function is as follows. Cap-specific adenosine methyltransferase that catalyzes formation of N(6),2'-O-dimethyladenosine cap (m6A(m)) by methylating the adenosine at the second transcribed position of capped mRNAs. Recruited to the early elongation complex of RNA polymerase II (RNAPII) via interaction with POLR2A and mediates formation of m6A(m) co-transcriptionally. The protein is mRNA (2'-O-methyladenosine-N(6)-)-methyltransferase of Mus musculus (Mouse).